The chain runs to 305 residues: MFDSDKNSILQSDFCQRLVVHSLLLVFLVILLCTSLYPSSAFIVGLLSSTCAAIGTYEMSSMVRMKFPFSFTRYSSIGSAIFVALTCLTARCKMLLPEHVDLIPWFFLFFWTVHLVFKSRHYKLGPIGSTGLALFCMLYVSVPIRLFLHILYGFVHTDTPFIGIWWAIFLIATTKSSDIFGYFFGKAFGKKRIAPVISPNKTVVGFVAGCIASILVSLIFYSHLPKSFANQIAMPWILVALGIILGISGFFGDIIESTFKRDAQIKNSSDLESIGGMLDVLDSLLLSTPIVYAILLITQNGTFLG.

7 helical membrane-spanning segments follow: residues 24–44, 97–117, 124–144, 151–171, 202–222, 232–252, and 277–297; these read LLVF…AFIV, PEHV…HLVF, LGPI…SVPI, LYGF…IFLI, TVVG…IFYS, IAMP…GFFG, and MLDV…ILLI.

The protein belongs to the CDS family.

It localises to the cell membrane. The catalysed reaction is a 1,2-diacyl-sn-glycero-3-phosphate + CTP + H(+) = a CDP-1,2-diacyl-sn-glycerol + diphosphate. It functions in the pathway phospholipid metabolism; CDP-diacylglycerol biosynthesis; CDP-diacylglycerol from sn-glycerol 3-phosphate: step 3/3. The protein is Phosphatidate cytidylyltransferase (cdsA) of Chlamydia muridarum (strain MoPn / Nigg).